Consider the following 414-residue polypeptide: Multifunctional CCA protein (414 aa).

ATP is bound by residues Gly8 and Arg11. Residues Gly8 and Arg11 each coordinate CTP. Residues Glu21 and Asp23 each contribute to the Mg(2+) site. The ATP site is built by Arg91, Arg137, and Arg140. Residues Arg91, Arg137, and Arg140 each contribute to the CTP site. Residues 228–329 (TGIHTMMTVA…LKLFDAIDVW (102 aa)) form the HD domain.

This sequence belongs to the tRNA nucleotidyltransferase/poly(A) polymerase family. Bacterial CCA-adding enzyme type 1 subfamily. Monomer. Can also form homodimers and oligomers. It depends on Mg(2+) as a cofactor. The cofactor is Ni(2+).

It carries out the reaction a tRNA precursor + 2 CTP + ATP = a tRNA with a 3' CCA end + 3 diphosphate. The catalysed reaction is a tRNA with a 3' CCA end + 2 CTP + ATP = a tRNA with a 3' CCACCA end + 3 diphosphate. Functionally, catalyzes the addition and repair of the essential 3'-terminal CCA sequence in tRNAs without using a nucleic acid template. Adds these three nucleotides in the order of C, C, and A to the tRNA nucleotide-73, using CTP and ATP as substrates and producing inorganic pyrophosphate. tRNA 3'-terminal CCA addition is required both for tRNA processing and repair. Also involved in tRNA surveillance by mediating tandem CCA addition to generate a CCACCA at the 3' terminus of unstable tRNAs. While stable tRNAs receive only 3'-terminal CCA, unstable tRNAs are marked with CCACCA and rapidly degraded. The polypeptide is Multifunctional CCA protein (Pectobacterium carotovorum subsp. carotovorum (strain PC1)).